The following is a 272-amino-acid chain: Regulatory protein RecX (272 aa).

This sequence belongs to the RecX family.

The protein localises to the cytoplasm. Its function is as follows. Modulates RecA activity. The chain is Regulatory protein RecX from Staphylococcus saprophyticus subsp. saprophyticus (strain ATCC 15305 / DSM 20229 / NCIMB 8711 / NCTC 7292 / S-41).